The following is a 56-amino-acid chain: Large ribosomal subunit protein bL32 (56 aa).

Residues 1–26 (MAVQKSKVTRSRRGQRRSHDALTAAA) form a disordered region. Positions 7–16 (KVTRSRRGQR) are enriched in basic residues.

This sequence belongs to the bacterial ribosomal protein bL32 family.

In Moritella marina (Vibrio marinus), this protein is Large ribosomal subunit protein bL32 (rpmF).